A 32-amino-acid polypeptide reads, in one-letter code: Photosystem I reaction center subunit XII (32 aa).

The helical transmembrane segment at 9-28 threads the bilayer; that stretch reads VYIALVVALIPGLLAWRLAT.

It belongs to the PsaM family.

It localises to the cellular thylakoid membrane. This Nostoc sp. (strain PCC 7120 / SAG 25.82 / UTEX 2576) protein is Photosystem I reaction center subunit XII.